Consider the following 229-residue polypeptide: uncharacterized protein (229 aa).

The 68-residue stretch at 2 to 69 folds into the S4 RNA-binding domain; it reads QRLAKLISNA…KSRLWIYYKP (68 aa). Catalysis depends on Asp-102, which acts as the Nucleophile.

It belongs to the pseudouridine synthase RsuA family.

It carries out the reaction a uridine in RNA = a pseudouridine in RNA. This is an uncharacterized protein from Rickettsia bellii (strain RML369-C).